The following is an 880-amino-acid chain: MQPTDPNKFTDKAWEVIVKSQDIVRAYQQQQLDVEHLILALIEDPTSLAVRILGRAEIDPIRLQQQLEAFTQRQTKVGKSDQLYLGRSLDVMLDRAEEIRERMKDGYISVEHMLLAFVDDERVGRKVLKGFNVDSAKIEASIKAVRGSQKVTDQNPESRYEALQKFGRDLTEQAKSGKLDPVIGRDDEIRRVIQVLSRRSKNNPVLIGEPGVGKTAIAEALAQRIVNGDVPESLKNRQLISLDIGSLIAGAKYRGEFEDRLKAVLREVTESNGNIVLFIDELHTVVGTGSNQQGAMDAGNLLKPMLARGELRCIGATTLDEFRKFIEKDAALERRFQQVYVDQPSVENTISILRGLKERYEVHHNVKISDSALVAAATLSARYIADRFLPDKAIDLVDEAAAQLKMEITSKPADLEAIDRRLMQLEMEKLSLAGEEKVAAPTKERLQRIELEITNLTEKQQDLNNQWQGEKQVLEAISLLKKEEDALRVQIEQAERAYDLNKAAQLKYGKLEGVQRDREAKEAKLLELQSQGSTLLREQVTEADIAEIVAKWTGIPVNRLLESERQKLLQLESHLHQRVIGQQEAVEAVSAAIRRARAGMKDPNRPIGSFLFMGPTGVGKTELARALAQFLFDADDALVRLDMSEYMEKHSVSRLVGAPPGYVGYEEGGQLSEAVRRHPYSVVLLDEVEKAHPDVFNILLQVLDDGRITDSQGRTVDFRNTVIVMTSNIGSEHILDVSGDDTQYETMRNRVMDALRSHFRPEFLNRVDDTILFHALSRSEMSHIIRIQLKRVESLLRDQKISFEISPAACDFLVEKGYDPVYGARPLKRAIQREIENPLATKILENTFISGDTIYIDQDENGLSFTNKAPVKVSVTQITT.

The Clp R domain maps to 6-148; the sequence is PNKFTDKAWE…EASIKAVRGS (143 aa). 2 repeat regions span residues 9-74 and 85-148; these read FTDK…TQRQ and LGRS…VRGS. Residues 161–343 form an NBD1 region; it reads EALQKFGRDL…RRFQQVYVDQ (183 aa). 208-215 lines the ATP pocket; sequence GEPGVGKT. The tract at residues 344–554 is linker; it reads PSVENTISIL…IAEIVAKWTG (211 aa). A coiled-coil region spans residues 394-530; sequence IDLVDEAAAQ…KEAKLLELQS (137 aa). An NBD2 region spans residues 564-775; sequence ERQKLLQLES…RVDDTILFHA (212 aa). 614-621 is an ATP binding site; that stretch reads GPTGVGKT. The interval 776 to 880 is C-terminal; it reads LSRSEMSHII…VKVSVTQITT (105 aa).

This sequence belongs to the ClpA/ClpB family. Homohexamer. The oligomerization is ATP-dependent.

The protein localises to the cytoplasm. In terms of biological role, part of a stress-induced multi-chaperone system, it is involved in the recovery of the cell from heat-induced damage, in cooperation with DnaK, DnaJ and GrpE. Acts before DnaK, in the processing of protein aggregates. Protein binding stimulates the ATPase activity; ATP hydrolysis unfolds the denatured protein aggregates, which probably helps expose new hydrophobic binding sites on the surface of ClpB-bound aggregates, contributing to the solubilization and refolding of denatured protein aggregates by DnaK. This chain is Chaperone protein ClpB 1 (clpB1), found in Nostoc sp. (strain PCC 7120 / SAG 25.82 / UTEX 2576).